We begin with the raw amino-acid sequence, 72 residues long: Translation initiation factor IF-1 (72 aa).

In terms of domain architecture, S1-like spans 1 to 72 (MAKDDVIVVD…DKGRITHRYK (72 aa)).

Belongs to the IF-1 family. In terms of assembly, component of the 30S ribosomal translation pre-initiation complex which assembles on the 30S ribosome in the order IF-2 and IF-3, IF-1 and N-formylmethionyl-tRNA(fMet); mRNA recruitment can occur at any time during PIC assembly.

The protein localises to the cytoplasm. Functionally, one of the essential components for the initiation of protein synthesis. Stabilizes the binding of IF-2 and IF-3 on the 30S subunit to which N-formylmethionyl-tRNA(fMet) subsequently binds. Helps modulate mRNA selection, yielding the 30S pre-initiation complex (PIC). Upon addition of the 50S ribosomal subunit IF-1, IF-2 and IF-3 are released leaving the mature 70S translation initiation complex. In Aliarcobacter butzleri (strain RM4018) (Arcobacter butzleri), this protein is Translation initiation factor IF-1.